The primary structure comprises 310 residues: tRNA pseudouridine synthase B (310 aa).

Aspartate 49 functions as the Nucleophile in the catalytic mechanism.

It belongs to the pseudouridine synthase TruB family. Type 1 subfamily.

The catalysed reaction is uridine(55) in tRNA = pseudouridine(55) in tRNA. Its function is as follows. Responsible for synthesis of pseudouridine from uracil-55 in the psi GC loop of transfer RNAs. This Rhizobium johnstonii (strain DSM 114642 / LMG 32736 / 3841) (Rhizobium leguminosarum bv. viciae) protein is tRNA pseudouridine synthase B.